Here is a 201-residue protein sequence, read N- to C-terminus: Urease accessory protein UreG (201 aa).

11 to 18 contacts GTP; the sequence is GPVGSGKT.

It belongs to the SIMIBI class G3E GTPase family. UreG subfamily. As to quaternary structure, homodimer. UreD, UreF and UreG form a complex that acts as a GTP-hydrolysis-dependent molecular chaperone, activating the urease apoprotein by helping to assemble the nickel containing metallocenter of UreC. The UreE protein probably delivers the nickel.

It localises to the cytoplasm. Facilitates the functional incorporation of the urease nickel metallocenter. This process requires GTP hydrolysis, probably effectuated by UreG. This Synechococcus sp. (strain CC9605) protein is Urease accessory protein UreG.